Consider the following 73-residue polypeptide: Probable minor pilin MMP0528 (73 aa).

A propeptide spanning residues 1–10 (MLKKLYSKKG) is cleaved from the precursor. A QXSXEXXXL motif is present at residues 11–19 (QVSMEMGIL).

Post-translationally, the N-terminus is probably cleaved by the prepilin peptidase EppA, which recognizes the class III signal sequence.

The protein resides in the secreted. It is found in the cell surface. The protein localises to the fimbrium. The chain is Probable minor pilin MMP0528 from Methanococcus maripaludis (strain DSM 14266 / JCM 13030 / NBRC 101832 / S2 / LL).